The primary structure comprises 494 residues: Aspartyl/glutamyl-tRNA(Asn/Gln) amidotransferase subunit B (494 aa).

Belongs to the GatB/GatE family. GatB subfamily. As to quaternary structure, heterotrimer of A, B and C subunits.

It catalyses the reaction L-glutamyl-tRNA(Gln) + L-glutamine + ATP + H2O = L-glutaminyl-tRNA(Gln) + L-glutamate + ADP + phosphate + H(+). The enzyme catalyses L-aspartyl-tRNA(Asn) + L-glutamine + ATP + H2O = L-asparaginyl-tRNA(Asn) + L-glutamate + ADP + phosphate + 2 H(+). Allows the formation of correctly charged Asn-tRNA(Asn) or Gln-tRNA(Gln) through the transamidation of misacylated Asp-tRNA(Asn) or Glu-tRNA(Gln) in organisms which lack either or both of asparaginyl-tRNA or glutaminyl-tRNA synthetases. The reaction takes place in the presence of glutamine and ATP through an activated phospho-Asp-tRNA(Asn) or phospho-Glu-tRNA(Gln). This is Aspartyl/glutamyl-tRNA(Asn/Gln) amidotransferase subunit B from Rhodopseudomonas palustris (strain BisB5).